Here is a 207-residue protein sequence, read N- to C-terminus: MNAKSPILVLIAGASGSGKTTFANEIVARIPQNTTSVIICQDSYYISNSQLNKNERRLINYDHPSSFEWDLMREQLSDIKKRKKIKVPIYDYKTEIRLDKTIDISDVDVIVFEGIYAIYDDVINQIADLKVFIETPKDECLIRRILRDVNERNRSFESVITQWRSTVSPMYDQFVEPSKKNANVSVLWNEHNRVALHLINKWINNIH.

Residue 13–20 (GASGSGKT) participates in ATP binding.

Belongs to the uridine kinase family.

It localises to the cytoplasm. It catalyses the reaction uridine + ATP = UMP + ADP + H(+). The enzyme catalyses cytidine + ATP = CMP + ADP + H(+). It functions in the pathway pyrimidine metabolism; CTP biosynthesis via salvage pathway; CTP from cytidine: step 1/3. The protein operates within pyrimidine metabolism; UMP biosynthesis via salvage pathway; UMP from uridine: step 1/1. The chain is Uridine kinase from Ureaplasma urealyticum serovar 10 (strain ATCC 33699 / Western).